The sequence spans 129 residues: Lysozyme C (129 aa).

Positions 1-129 (KVYGRCELAA…VNAWTRGCRL (129 aa)) constitute a C-type lysozyme domain. 4 disulfides stabilise this stretch: cysteine 6–cysteine 127, cysteine 30–cysteine 115, cysteine 64–cysteine 80, and cysteine 76–cysteine 94. Catalysis depends on residues glutamate 35 and aspartate 52.

The protein belongs to the glycosyl hydrolase 22 family. Monomer.

It is found in the secreted. It catalyses the reaction Hydrolysis of (1-&gt;4)-beta-linkages between N-acetylmuramic acid and N-acetyl-D-glucosamine residues in a peptidoglycan and between N-acetyl-D-glucosamine residues in chitodextrins.. Functionally, lysozymes have primarily a bacteriolytic function; those in tissues and body fluids are associated with the monocyte-macrophage system and enhance the activity of immunoagents. This Chrysolophus amherstiae (Lady Amherst's pheasant) protein is Lysozyme C (LYZ).